Reading from the N-terminus, the 407-residue chain is Protein trichome birefringence-like 12 (407 aa).

A helical; Signal-anchor for type II membrane protein transmembrane segment spans residues Ser21–Leu41. The GDS motif motif lies at Gly130–Ser132. A DCXHWCLPGXXDXWN motif motif is present at residues Asp379–Val393.

Belongs to the PC-esterase family. TBL subfamily.

It localises to the membrane. Functionally, may act as a bridging protein that binds pectin and other cell wall polysaccharides. Probably involved in maintaining esterification of pectins. May be involved in the specific O-acetylation of cell wall polymers. This chain is Protein trichome birefringence-like 12 (TBL12), found in Arabidopsis thaliana (Mouse-ear cress).